A 212-amino-acid polypeptide reads, in one-letter code: uncharacterized protein (212 aa).

An SIS domain is found at 46–198 (LERVYREKRK…IYSLMTRLGI (153 aa)).

This sequence belongs to the SIS family. PHI subfamily.

This is an uncharacterized protein from Aeropyrum pernix (strain ATCC 700893 / DSM 11879 / JCM 9820 / NBRC 100138 / K1).